Reading from the N-terminus, the 280-residue chain is Phosphatidylglycerol--prolipoprotein diacylglyceryl transferase (280 aa).

Helical transmembrane passes span 12 to 32 (FGPF…LIGL), 52 to 72 (LLPL…VAFE), 86 to 106 (IWEG…TLIL), and 115 to 133 (FWDV…QSIG). R134 contributes to the a 1,2-diacyl-sn-glycero-3-phospho-(1'-sn-glycerol) binding site. The next 3 membrane-spanning stretches (helical) occupy residues 173–193 (PTFL…ILLF), 203–223 (LPAG…RVWI), and 246–266 (IAQL…WWLY).

Belongs to the Lgt family.

It localises to the cell inner membrane. The enzyme catalyses L-cysteinyl-[prolipoprotein] + a 1,2-diacyl-sn-glycero-3-phospho-(1'-sn-glycerol) = an S-1,2-diacyl-sn-glyceryl-L-cysteinyl-[prolipoprotein] + sn-glycerol 1-phosphate + H(+). Its pathway is protein modification; lipoprotein biosynthesis (diacylglyceryl transfer). In terms of biological role, catalyzes the transfer of the diacylglyceryl group from phosphatidylglycerol to the sulfhydryl group of the N-terminal cysteine of a prolipoprotein, the first step in the formation of mature lipoproteins. This Synechococcus sp. (strain CC9902) protein is Phosphatidylglycerol--prolipoprotein diacylglyceryl transferase.